The primary structure comprises 955 residues: Mediator of RNA polymerase II transcription subunit 16 (955 aa).

It belongs to the Mediator complex subunit 16 family. As to quaternary structure, component of the Mediator complex.

Its subcellular location is the nucleus. In terms of biological role, component of the Mediator complex, a coactivator involved in the regulated transcription of nearly all RNA polymerase II-dependent genes. Mediator functions as a bridge to convey information from gene-specific regulatory proteins to the basal RNA polymerase II transcription machinery. Mediator is recruited to promoters by direct interactions with regulatory proteins and serves as a scaffold for the assembly of a functional preinitiation complex with RNA polymerase II and the general transcription factors. In Neosartorya fischeri (strain ATCC 1020 / DSM 3700 / CBS 544.65 / FGSC A1164 / JCM 1740 / NRRL 181 / WB 181) (Aspergillus fischerianus), this protein is Mediator of RNA polymerase II transcription subunit 16 (sin4).